A 258-amino-acid polypeptide reads, in one-letter code: Acetylglutamate kinase (258 aa).

Substrate contacts are provided by residues 41 to 42, R63, and N156; that span reads GG.

Belongs to the acetylglutamate kinase family. ArgB subfamily.

It localises to the cytoplasm. The enzyme catalyses N-acetyl-L-glutamate + ATP = N-acetyl-L-glutamyl 5-phosphate + ADP. It participates in amino-acid biosynthesis; L-arginine biosynthesis; N(2)-acetyl-L-ornithine from L-glutamate: step 2/4. Catalyzes the ATP-dependent phosphorylation of N-acetyl-L-glutamate. The protein is Acetylglutamate kinase of Bacillus licheniformis (strain ATCC 14580 / DSM 13 / JCM 2505 / CCUG 7422 / NBRC 12200 / NCIMB 9375 / NCTC 10341 / NRRL NRS-1264 / Gibson 46).